The sequence spans 412 residues: Gamma-glutamyl phosphate reductase (412 aa).

The protein belongs to the gamma-glutamyl phosphate reductase family.

The protein resides in the cytoplasm. It carries out the reaction L-glutamate 5-semialdehyde + phosphate + NADP(+) = L-glutamyl 5-phosphate + NADPH + H(+). It participates in amino-acid biosynthesis; L-proline biosynthesis; L-glutamate 5-semialdehyde from L-glutamate: step 2/2. In terms of biological role, catalyzes the NADPH-dependent reduction of L-glutamate 5-phosphate into L-glutamate 5-semialdehyde and phosphate. The product spontaneously undergoes cyclization to form 1-pyrroline-5-carboxylate. This chain is Gamma-glutamyl phosphate reductase, found in Bartonella henselae (strain ATCC 49882 / DSM 28221 / CCUG 30454 / Houston 1) (Rochalimaea henselae).